Here is a 146-residue protein sequence, read N- to C-terminus: Small ribosomal subunit protein bS6 (146 aa).

The tract at residues 106–146 (QAAATQRAAERRAQREAERNAAQAQSSASNQARTAATTSGK) is disordered. The segment covering 113–124 (AAERRAQREAER) has biased composition (basic and acidic residues). A compositionally biased stretch (low complexity) spans 125–146 (NAAQAQSSASNQARTAATTSGK).

Belongs to the bacterial ribosomal protein bS6 family.

Functionally, binds together with bS18 to 16S ribosomal RNA. The polypeptide is Small ribosomal subunit protein bS6 (Oenococcus oeni (strain ATCC BAA-331 / PSU-1)).